A 179-amino-acid chain; its full sequence is Large ribosomal subunit protein uL6 (179 aa).

This sequence belongs to the universal ribosomal protein uL6 family. As to quaternary structure, part of the 50S ribosomal subunit.

In terms of biological role, this protein binds to the 23S rRNA, and is important in its secondary structure. It is located near the subunit interface in the base of the L7/L12 stalk, and near the tRNA binding site of the peptidyltransferase center. The chain is Large ribosomal subunit protein uL6 from Acidobacterium capsulatum (strain ATCC 51196 / DSM 11244 / BCRC 80197 / JCM 7670 / NBRC 15755 / NCIMB 13165 / 161).